A 288-amino-acid polypeptide reads, in one-letter code: Homoserine kinase (288 aa).

79–89 is a binding site for ATP; sequence PPARGLGSSSA.

Belongs to the GHMP kinase family. Homoserine kinase subfamily.

Its subcellular location is the cytoplasm. The catalysed reaction is L-homoserine + ATP = O-phospho-L-homoserine + ADP + H(+). It functions in the pathway amino-acid biosynthesis; L-threonine biosynthesis; L-threonine from L-aspartate: step 4/5. In terms of biological role, catalyzes the ATP-dependent phosphorylation of L-homoserine to L-homoserine phosphate. The polypeptide is Homoserine kinase (Listeria monocytogenes serotype 4a (strain HCC23)).